The following is a 219-amino-acid chain: Pyridoxine/pyridoxamine 5'-phosphate oxidase (219 aa).

Residues 13 to 16 and Lys-76 each bind substrate; that span reads RVEY. FMN-binding positions include 71–76, 86–87, Lys-93, and Gln-115; these read RSVLCK and FT. 3 residues coordinate substrate: Tyr-133, Arg-137, and Ser-141. FMN is bound by residues 150-151 and Trp-196; that span reads QS. 202-204 serves as a coordination point for substrate; sequence RVH. Arg-206 is an FMN binding site.

This sequence belongs to the pyridoxamine 5'-phosphate oxidase family. In terms of assembly, homodimer. FMN serves as cofactor.

The catalysed reaction is pyridoxamine 5'-phosphate + O2 + H2O = pyridoxal 5'-phosphate + H2O2 + NH4(+). The enzyme catalyses pyridoxine 5'-phosphate + O2 = pyridoxal 5'-phosphate + H2O2. Its pathway is cofactor metabolism; pyridoxal 5'-phosphate salvage; pyridoxal 5'-phosphate from pyridoxamine 5'-phosphate: step 1/1. It functions in the pathway cofactor metabolism; pyridoxal 5'-phosphate salvage; pyridoxal 5'-phosphate from pyridoxine 5'-phosphate: step 1/1. Its function is as follows. Catalyzes the oxidation of either pyridoxine 5'-phosphate (PNP) or pyridoxamine 5'-phosphate (PMP) into pyridoxal 5'-phosphate (PLP). This is Pyridoxine/pyridoxamine 5'-phosphate oxidase from Mycobacterium leprae (strain TN).